The primary structure comprises 437 residues: Ribosomal protein uS12 methylthiotransferase RimO (437 aa).

The region spanning 9 to 124 (TKVNIVTLGC…LPAILKKFRA (116 aa)) is the MTTase N-terminal domain. The [4Fe-4S] cluster site is built by C18, C56, C90, C151, C155, and C158. A Radical SAM core domain is found at 137-367 (TTPSHYAYVK…MSIQEGISAE (231 aa)). The 68-residue stretch at 370–437 (EKKIGNTYKV…EFDLFGEIVK (68 aa)) folds into the TRAM domain.

The protein belongs to the methylthiotransferase family. RimO subfamily. Requires [4Fe-4S] cluster as cofactor.

It localises to the cytoplasm. The catalysed reaction is L-aspartate(89)-[ribosomal protein uS12]-hydrogen + (sulfur carrier)-SH + AH2 + 2 S-adenosyl-L-methionine = 3-methylsulfanyl-L-aspartate(89)-[ribosomal protein uS12]-hydrogen + (sulfur carrier)-H + 5'-deoxyadenosine + L-methionine + A + S-adenosyl-L-homocysteine + 2 H(+). In terms of biological role, catalyzes the methylthiolation of an aspartic acid residue of ribosomal protein uS12. This chain is Ribosomal protein uS12 methylthiotransferase RimO, found in Cytophaga hutchinsonii (strain ATCC 33406 / DSM 1761 / CIP 103989 / NBRC 15051 / NCIMB 9469 / D465).